Reading from the N-terminus, the 480-residue chain is Serralysin (480 aa).

His-181 lines the Zn(2+) pocket. Residue Glu-182 is part of the active site. Positions 185 and 191 each coordinate Zn(2+). Residues Arg-260, Asp-263, Asp-292, Gly-294, Gly-295, Asp-297, Thr-334, and Glu-336 each contribute to the Ca(2+) site. Hemolysin-type calcium-binding repeat units lie at residues 339 to 356 and 357 to 374; these read IGGS…ANTL and KGGA…ADNL.

The protein belongs to the peptidase M10B family. Zn(2+) serves as cofactor. Ca(2+) is required as a cofactor.

It localises to the secreted. The catalysed reaction is Preferential cleavage of bonds with hydrophobic residues in P1'.. This Photorhabdus laumondii subsp. laumondii (strain DSM 15139 / CIP 105565 / TT01) (Photorhabdus luminescens subsp. laumondii) protein is Serralysin (prtA).